A 502-amino-acid polypeptide reads, in one-letter code: Glycerol kinase (502 aa).

T14 serves as a coordination point for ADP. Residues T14, T15, and S16 each coordinate ATP. Position 14 (T14) interacts with sn-glycerol 3-phosphate. R18 lines the ADP pocket. Sn-glycerol 3-phosphate contacts are provided by R84, E85, Y136, and D246. Positions 84, 85, 136, 246, and 247 each coordinate glycerol. Residues T268 and G311 each coordinate ADP. ATP contacts are provided by T268, G311, Q315, and G412. ADP is bound by residues G412 and N416.

It belongs to the FGGY kinase family. As to quaternary structure, homotetramer and homodimer (in equilibrium). Heterodimer with EIIA-Glc. Binds 1 zinc ion per glycerol kinase EIIA-Glc dimer. The zinc ion is important for dimerization.

It catalyses the reaction glycerol + ATP = sn-glycerol 3-phosphate + ADP + H(+). It functions in the pathway polyol metabolism; glycerol degradation via glycerol kinase pathway; sn-glycerol 3-phosphate from glycerol: step 1/1. Its activity is regulated as follows. Activity of this regulatory enzyme is affected by several metabolites. Allosterically and non-competitively inhibited by fructose 1,6-bisphosphate (FBP) and unphosphorylated phosphocarrier protein EIIA-Glc (III-Glc), an integral component of the bacterial phosphotransferase (PTS) system. In terms of biological role, key enzyme in the regulation of glycerol uptake and metabolism. Catalyzes the phosphorylation of glycerol to yield sn-glycerol 3-phosphate. The chain is Glycerol kinase from Escherichia coli (strain ATCC 8739 / DSM 1576 / NBRC 3972 / NCIMB 8545 / WDCM 00012 / Crooks).